The following is an 890-amino-acid chain: Leucine--tRNA ligase (890 aa).

Residues 48 to 58 (PYPSGKLHMGH) carry the 'HIGH' region motif. Positions 645–649 (KMSKS) match the 'KMSKS' region motif. Lys-648 serves as a coordination point for ATP.

This sequence belongs to the class-I aminoacyl-tRNA synthetase family.

The protein localises to the cytoplasm. It carries out the reaction tRNA(Leu) + L-leucine + ATP = L-leucyl-tRNA(Leu) + AMP + diphosphate. The sequence is that of Leucine--tRNA ligase from Polynucleobacter asymbioticus (strain DSM 18221 / CIP 109841 / QLW-P1DMWA-1) (Polynucleobacter necessarius subsp. asymbioticus).